Reading from the N-terminus, the 157-residue chain is Small ribosomal subunit protein uS7 (157 aa).

This sequence belongs to the universal ribosomal protein uS7 family. As to quaternary structure, part of the 30S ribosomal subunit. Contacts proteins S9 and S11.

In terms of biological role, one of the primary rRNA binding proteins, it binds directly to 16S rRNA where it nucleates assembly of the head domain of the 30S subunit. Is located at the subunit interface close to the decoding center, probably blocks exit of the E-site tRNA. This chain is Small ribosomal subunit protein uS7, found in Albidiferax ferrireducens (strain ATCC BAA-621 / DSM 15236 / T118) (Rhodoferax ferrireducens).